We begin with the raw amino-acid sequence, 192 residues long: Thymidylate kinase (192 aa).

Residue 7–14 (GIDCVGKS) coordinates ATP.

It belongs to the thymidylate kinase family.

It catalyses the reaction dTMP + ATP = dTDP + ADP. In terms of biological role, phosphorylation of dTMP to form dTDP in both de novo and salvage pathways of dTTP synthesis. The protein is Thymidylate kinase of Campylobacter jejuni subsp. jejuni serotype O:6 (strain 81116 / NCTC 11828).